Here is a 201-residue protein sequence, read N- to C-terminus: Dephospho-CoA kinase (201 aa).

The region spanning 4 to 201 (AFFVTASIAC…VIQEISKGKM (198 aa)) is the DPCK domain. 12–17 (ACGKST) contributes to the ATP binding site.

Belongs to the CoaE family.

Its subcellular location is the cytoplasm. The catalysed reaction is 3'-dephospho-CoA + ATP = ADP + CoA + H(+). Its pathway is cofactor biosynthesis; coenzyme A biosynthesis; CoA from (R)-pantothenate: step 5/5. Functionally, catalyzes the phosphorylation of the 3'-hydroxyl group of dephosphocoenzyme A to form coenzyme A. The polypeptide is Dephospho-CoA kinase (Campylobacter jejuni (strain RM1221)).